Consider the following 922-residue polypeptide: DNA gyrase subunit A (922 aa).

Residues 34-534 (LPDVRDGLKP…SSAEINIEDL (501 aa)) form the Topo IIA-type catalytic domain. The active-site O-(5'-phospho-DNA)-tyrosine intermediate is Y122. Positions 561-567 (QRRGGRG) match the GyrA-box motif. 2 disordered regions span residues 715–763 (MQPM…VRPM) and 899–922 (IDGE…DPEE). Acidic residues predominate over residues 723–743 (DDVDGDDESVIDAGNDDDGSD).

This sequence belongs to the type II topoisomerase GyrA/ParC subunit family. In terms of assembly, heterotetramer, composed of two GyrA and two GyrB chains. In the heterotetramer, GyrA contains the active site tyrosine that forms a transient covalent intermediate with DNA, while GyrB binds cofactors and catalyzes ATP hydrolysis.

The protein localises to the cytoplasm. The catalysed reaction is ATP-dependent breakage, passage and rejoining of double-stranded DNA.. In terms of biological role, a type II topoisomerase that negatively supercoils closed circular double-stranded (ds) DNA in an ATP-dependent manner to modulate DNA topology and maintain chromosomes in an underwound state. Negative supercoiling favors strand separation, and DNA replication, transcription, recombination and repair, all of which involve strand separation. Also able to catalyze the interconversion of other topological isomers of dsDNA rings, including catenanes and knotted rings. Type II topoisomerases break and join 2 DNA strands simultaneously in an ATP-dependent manner. In Aeromonas salmonicida, this protein is DNA gyrase subunit A.